Reading from the N-terminus, the 646-residue chain is DEAD-box ATP-dependent RNA helicase 52 (646 aa).

2 disordered regions span residues 1–64 (MSSN…ANSG) and 76–117 (GSGY…PAVN). An N-acetylserine modification is found at serine 2. Gly residues-rich tracts occupy residues 54 to 64 (DRGGYGGANSG) and 76 to 87 (GSGYGGRGGPVG). Positions 146–174 (NTFAEIDLGEALNLNIQRCKYVKPTPVQR) match the Q motif motif. The Helicase ATP-binding domain maps to 177–361 (IPILAAGRDL…SDFLSNYIFL (185 aa)). 190–197 (AQTGSGKT) lines the ATP pocket. A DEAD box motif is present at residues 305–308 (DEAD). Residues 388–539 (HLMDLLHAQR…EVPDWLTRYA (152 aa)) form the Helicase C-terminal domain.

Belongs to the DEAD box helicase family. DDX3/DED1 subfamily.

It catalyses the reaction ATP + H2O = ADP + phosphate + H(+). The sequence is that of DEAD-box ATP-dependent RNA helicase 52 (RH52) from Arabidopsis thaliana (Mouse-ear cress).